A 485-amino-acid polypeptide reads, in one-letter code: Adenosylhomocysteinase (485 aa).

Thr-60, Asp-146, and Glu-208 together coordinate substrate. 209 to 211 is a binding site for NAD(+); sequence TTT. Substrate contacts are provided by Lys-238 and Asp-242. NAD(+) is bound by residues Asn-243, 272–277, Glu-295, Asn-330, 351–353, and Asn-399; these read GYGDVG and IGH.

The protein belongs to the adenosylhomocysteinase family. Requires NAD(+) as cofactor.

It localises to the cytoplasm. The catalysed reaction is S-adenosyl-L-homocysteine + H2O = L-homocysteine + adenosine. Its pathway is amino-acid biosynthesis; L-homocysteine biosynthesis; L-homocysteine from S-adenosyl-L-homocysteine: step 1/1. May play a key role in the regulation of the intracellular concentration of adenosylhomocysteine. This Streptomyces griseus subsp. griseus (strain JCM 4626 / CBS 651.72 / NBRC 13350 / KCC S-0626 / ISP 5235) protein is Adenosylhomocysteinase.